The primary structure comprises 918 residues: Exostosin-like 3 (918 aa).

Residues 1–30 (MTGYTMLRNGGVGNGGQTCMLRWSNRIRLT) lie on the Cytoplasmic side of the membrane. The interval 1–140 (MTGYTMLRNG…LKNVISQTEH (140 aa)) is required for interaction with REG3A. A helical; Signal-anchor for type II membrane protein membrane pass occupies residues 31–51 (WLSFTLFIILVFFPLIAHYYL). The Lumenal segment spans residues 52-918 (TTLDEADEAG…HDKTKCFKFI (867 aa)). 2 disulfides stabilise this stretch: Cys177/Cys182 and Cys188/Cys236. An N-linked (GlcNAc...) asparagine glycan is attached at Asn290. Ser361 is subject to Phosphoserine. Cysteines 399 and 414 form a disulfide. Asn591 carries N-linked (GlcNAc...) asparagine glycosylation. Residues Leu667, Arg671, Asn696, Asn722, Arg727, Asp743, Asp744, and Asp745 each contribute to the UDP-N-acetyl-alpha-D-glucosamine site. Asp745 is a Mn(2+) binding site. Asn789 carries an N-linked (GlcNAc...) asparagine glycan. Cys830 and Cys878 are joined by a disulfide. UDP-N-acetyl-alpha-D-glucosamine contacts are provided by Glu831, Asp832, and Arg875. Asp832 is an active-site residue.

Belongs to the glycosyltransferase 47 family. Homodimer; disulfide-linked. Interacts with REG3A. Requires Mn(2+) as cofactor. As to expression, expressed in pancreatic islet beta-cells. Expressed in lung epithelial cells. Expressed in microglia.

It is found in the endoplasmic reticulum membrane. The protein localises to the golgi apparatus. The protein resides in the cell membrane. Its subcellular location is the nucleus. The catalysed reaction is 3-O-(beta-D-GlcA-(1-&gt;3)-beta-D-Gal-(1-&gt;3)-beta-D-Gal-(1-&gt;4)-beta-D-Xyl)-L-seryl-[protein] + UDP-N-acetyl-alpha-D-glucosamine = 3-O-(alpha-D-GlcNAc-(1-&gt;4)-beta-D-GlcA-(1-&gt;3)-beta-D-Gal-(1-&gt;3)-beta-D-Gal-(1-&gt;4)-beta-D-Xyl)-L-seryl-[protein] + UDP + H(+). It participates in glycan metabolism; heparan sulfate biosynthesis. In terms of biological role, glycosyltransferase which regulates the biosynthesis of heparan sulfate (HS). Initiates HS synthesis by transferring the first N-acetyl-alpha-D-glucosamine (alpha-GlcNAc) residue (GlcNAcT-I activity) to the tetrasaccharide linker (GlcA-Gal-Gal-Xyl-)Ser core linker. May also transfer alpha-GlcNAc residues during HS elongation (GlcNAcT-II activity). Lacks glucuronyl transferase II (GlcAT-II) activity. Important for both skeletal development and hematopoiesis, through the formation of HS proteoglycans (HSPGs). Through the synthesis of HS, regulates postnatal pancreatic islet maturation and insulin secretion. Its function is as follows. Receptor for REG3A, REG3B and REG3G, induces the activation of downstream signaling pathways such as PI3K-AKT or RAS-RAF-MEK-ERK signaling pathway. Required for the function of REG3A in regulating keratinocyte proliferation and differentiation. Required for the inhibition of skin inflammation mediated by REG3A through the activation of PI3K-AKT-STAT3 pathway. Required for the function of REG3A and REG3G in glucose tolerance in pancreas. Expressed in microglia, is activated by nociceptor-derived REG3G in response to endotoxins, leading to the inhibition of kynurenine pathway to prevent endotoxic death. The chain is Exostosin-like 3 from Mus musculus (Mouse).